The sequence spans 303 residues: MTEIVADKTVEVVKNAIETADGALDLYNKYLDQVIPWQTFDETIKELSRFKQEYSQAASVLVGDIKTLLMDSQDKYFEATQTVYEWCGVATQLLAAYILLFDEYNEKKASAQKDILIKVLDDGITKLNEAQKSLLVSSQSFNNASGKLLALDSQLTNDFSEKSSYFQSQVDKIRKEAYAGAAAGVVAGPFGLIISYSIAAGVVEGKLIPELKNKLKSVQNFFTTLSNTVKQANKDIDAAKLKLTTEIAAIGEIKTETETTRFYVDYDDLMLSLLKEAAKKMINTCNEYQKRHGKKTLFEVPEV.

The cysteines at positions 87 and 285 are disulfide-linked. A helical membrane pass occupies residues 183 to 203; sequence AGVVAGPFGLIISYSIAAGVV.

In terms of assembly, monomer and oligomer. In periplasm, it is present as a monomer, while in outer membrane vesicles, it oligomerizes to form a pore structure that is active. The pore is formed by a dodecamer. In terms of processing, in periplasm, it forms a disulfide bond between Cys-87 and Cys-285, which prevents the oligomerization. In outer membrane vesicles, the redox status prevents formation of the disulfide bond, leading to oligomerization and pore formation.

It is found in the secreted. Its subcellular location is the periplasm. The protein localises to the host cell membrane. Functionally, toxin, which has some hemolytic activity towards mammalian cells. Acts by forming a pore-like structure upon contact with mammalian cells. In Escherichia coli (strain K12), this protein is Hemolysin E, chromosomal (hlyE).